A 147-amino-acid polypeptide reads, in one-letter code: UPF0306 protein YPTB0506 (147 aa).

This sequence belongs to the UPF0306 family.

The polypeptide is UPF0306 protein YPTB0506 (Yersinia pseudotuberculosis serotype I (strain IP32953)).